The following is a 257-amino-acid chain: 3-oxo-5-alpha-steroid 4-dehydrogenase 1 (257 aa).

6 helical membrane passes run Phe-7–Leu-27, Ala-50–Ala-70, Ile-84–Ile-104, Pro-109–Gln-129, Phe-149–Val-169, and Ala-208–Phe-228.

It belongs to the steroid 5-alpha reductase family.

Its subcellular location is the microsome membrane. It is found in the endoplasmic reticulum membrane. The catalysed reaction is a 3-oxo-5alpha-steroid + NADP(+) = a 3-oxo-Delta(4)-steroid + NADPH + H(+). It carries out the reaction 5alpha-pregnane-3,20-dione + NADP(+) = progesterone + NADPH + H(+). The enzyme catalyses 17beta-hydroxy-5alpha-androstan-3-one + NADP(+) = testosterone + NADPH + H(+). It catalyses the reaction androst-4-ene-3,17-dione + NADPH + H(+) = 5alpha-androstan-3,17-dione + NADP(+). In terms of biological role, converts testosterone into 5-alpha-dihydrotestosterone and progesterone or corticosterone into their corresponding 5-alpha-3-oxosteroids. It plays a central role in sexual differentiation and androgen physiology. The protein is 3-oxo-5-alpha-steroid 4-dehydrogenase 1 (SRD5A1) of Bos taurus (Bovine).